Reading from the N-terminus, the 455-residue chain is MEEDVKKVKKPGIVSPFKRVFLKGEKGRDKKALEKSTERRALHTFSLSLPDHRIDPDILLNDYIEKEVKYLGQLTSVPGYLNPSSRTEVLQLIDNARKSHQLAGQLTSEQDAVVSLSAYNVKLVWRDGEDIILRVPIHDIAAVSYIRDDSLHLVVLKTAQEPGGSPCHSTEMSKSPTLSSLSESGAVLVEVCCLLVLAVDNKAAAEELCLLLSQVFQIVYTESTIDFLDRAIFDGATTPTRHLSIYSEDSSSKVDVKDVFEAEASTFSFQSSLEAGHSSSPSPTSAPASPQTKTASESELSTTAAELLQDYMTTLRTKLSSKEIQQFATLLHEYRNGASIHEFCINLRQLYGDSRKFLLLGLRPFIPEKDSQHFENFLETIGVKDGRGIITDSFGRYKRTTSSASDSTTNGNGAAGGSDEGTATSEGDEWDRMISDISNDIEALGSSMDQDGVPS.

In terms of domain architecture, PID spans 60 to 247 (LNDYIEKEVK…TPTRHLSIYS (188 aa)). Disordered regions lie at residues 272 to 299 (SLEAGHSSSPSPTSAPASPQTKTASESE) and 399 to 432 (RTTSSASDSTTNGNGAAGGSDEGTATSEGDEWDR). Residues 278–295 (SSSPSPTSAPASPQTKTA) are compositionally biased toward low complexity. The interval 292 to 385 (TKTASESELS…NFLETIGVKD (94 aa)) is harmonin homology domain. Polar residues predominate over residues 400-412 (TTSSASDSTTNGN).

This sequence belongs to the CCM2 family. Part of a complex with MAP2K3, MAP3K3 and RAC1. Binds RAC1 directly and independently of its nucleotide-bound state. Interacts with HEG1 and KRIT1; KRIT1 greatly facilitates the interaction with HEG1.

It is found in the cytoplasm. Component of the CCM signaling pathway which is a crucial regulator of heart and vessel formation and integrity. May act through the stabilization of endothelial cell junctions. May also function as a scaffold protein for MAP2K3-MAP3K3 signaling. Seems to play a major role in the modulation of MAP3K3-dependent p38 activation induced by hyperosmotic shock. This Danio rerio (Zebrafish) protein is Cerebral cavernous malformations protein 2 homolog (ccm2).